Here is a 272-residue protein sequence, read N- to C-terminus: Insulin-like growth factor-binding protein 1 (272 aa).

The N-terminal stretch at 1-25 (MPEVPAAGLWPFLLLLAVQVSTVAS) is a signal peptide. Positions 28–109 (QPWHCAPCSA…TRGQGACVPE (82 aa)) constitute an IGFBP N-terminal domain. Intrachain disulfides connect Cys-32–Cys-59, Cys-35–Cys-61, Cys-43–Cys-62, Cys-50–Cys-65, and Cys-73–Cys-86. Ser-139, Ser-157, and Ser-169 each carry phosphoserine. Thr-170 carries the post-translational modification Phosphothreonine. Phosphotyrosine is present on Tyr-171. The 79-residue stretch at 186–264 (KQPCRRELYK…SLEIRGDPNC (79 aa)) folds into the Thyroglobulin type-1 domain. 3 disulfide bridges follow: Cys-189/Cys-219, Cys-230/Cys-241, and Cys-243/Cys-264. Phosphoserine is present on Ser-255. A Cell attachment site motif is present at residues 259–261 (RGD).

In terms of assembly, binds equally well IGF1 and IGF2. Interacts with integrin ITGA5:ITGB1. Interacts with VHL; this interaction inhibits HIF1A degradation.

The protein resides in the secreted. In terms of biological role, multifunctional protein that plays a critical role in regulating the availability of IGFs such as IGF1 and IGF2 to their receptors and thereby regulates IGF-mediated cellular processes including cell migration, proliferation, differentiation or apoptosis in a cell-type specific manner. Also plays a positive role in cell migration by interacting with integrin ITGA5:ITGB1 through its RGD motif. Mechanistically, binding to integrins leads to activation of focal adhesion kinase/PTK2 and stimulation of the mitogen-activated protein kinase (MAPK) pathway. Regulates cardiomyocyte apoptosis by suppressing HIF-1alpha/HIF1A degradation through ubiquitination. This Ictidomys tridecemlineatus (Thirteen-lined ground squirrel) protein is Insulin-like growth factor-binding protein 1 (IGFBP1).